We begin with the raw amino-acid sequence, 623 residues long: Ciliated left-right organizer metallopeptidase (623 aa).

The N-terminal stretch at 1–20 (MSFLLCIGILLLPWFPCVCG) is a signal peptide. Topologically, residues 21–578 (KCIFDQIQRS…LFLVSEAKIS (558 aa)) are extracellular. His249 contributes to the Zn(2+) binding site. Residue Glu250 is part of the active site. Zn(2+)-binding residues include His253 and His326. A helical membrane pass occupies residues 579–599 (LAAVLSLMAVFALLSAAVLLY). Over 600–623 (RKNLSVRVHAASYRTPLPHILYRN) the chain is Cytoplasmic.

The protein belongs to the peptidase M8 family. Zn(2+) is required as a cofactor. Expressed specifically in dorsal forerunner cells (DFCs) that form a ciliated Kupffer's vesicle later.

The protein resides in the membrane. Plays an essential role for patterning the left-right axis. Requires solely on the left side, downstream of the leftward flow, but upstream of dand5, a nodal inhibitor involved in left-right patterning. The polypeptide is Ciliated left-right organizer metallopeptidase (cirop) (Danio rerio (Zebrafish)).